The following is a 387-amino-acid chain: MQTGHPADGVYFGLMSGTSMDGVDGVAVRFEAGKPPAVLSEAFVGFADTLRDALFALQQPGDDEIEREALAANALAARYAVCCHELLRTAGLSPDDVRALGVHGQTVRHRPERGYTRQLNNAALLAELTRIDVIADFRSRDVAAGGQGAPLVPAFHATVFGSPDETRVVCNLGGISNITILPAGGGPQGEGHARNDTVRGHDCGPANALIDAWVERHLKQPFDDGGRFAARGTVDETLLAALLDEPYFRQNAPKSTGRDLFNADWLDAKLAGFQHLAPENVQATLTALTAATVADEIARHAGDCRAVYVCGGGARNPVLLDALATALAARGLDAAVATTAALGVPPQQVESLAFAWLAYRFNARAPGNVSTVTGAAGERVLGALYPR.

17-24 (GTSMDGVD) is a binding site for ATP.

It belongs to the anhydro-N-acetylmuramic acid kinase family.

The enzyme catalyses 1,6-anhydro-N-acetyl-beta-muramate + ATP + H2O = N-acetyl-D-muramate 6-phosphate + ADP + H(+). The protein operates within amino-sugar metabolism; 1,6-anhydro-N-acetylmuramate degradation. It functions in the pathway cell wall biogenesis; peptidoglycan recycling. Functionally, catalyzes the specific phosphorylation of 1,6-anhydro-N-acetylmuramic acid (anhMurNAc) with the simultaneous cleavage of the 1,6-anhydro ring, generating MurNAc-6-P. Is required for the utilization of anhMurNAc either imported from the medium or derived from its own cell wall murein, and thus plays a role in cell wall recycling. This Burkholderia pseudomallei (strain 1710b) protein is Anhydro-N-acetylmuramic acid kinase.